The sequence spans 285 residues: Glutamate racemase (285 aa).

Residues 28–29 (DS) and 60–61 (YG) each bind substrate. The Proton donor/acceptor role is filled by C92. 93 to 94 (NT) is a binding site for substrate. C204 (proton donor/acceptor) is an active-site residue. 205–206 (TH) is a substrate binding site.

It belongs to the aspartate/glutamate racemases family.

It catalyses the reaction L-glutamate = D-glutamate. Its pathway is cell wall biogenesis; peptidoglycan biosynthesis. Its function is as follows. Provides the (R)-glutamate required for cell wall biosynthesis. This Escherichia fergusonii (strain ATCC 35469 / DSM 13698 / CCUG 18766 / IAM 14443 / JCM 21226 / LMG 7866 / NBRC 102419 / NCTC 12128 / CDC 0568-73) protein is Glutamate racemase.